The following is a 108-amino-acid chain: MVATGLFVGLNKGHVVTKREQPPRPNNRKGKTSKRTIFIRNLIKEVAGQAPYEKRITELLKVGKDKRALKVAKRKLGTHKRAKRKREEMSSVLRKMRSGGAGASEKKK.

Disordered regions lie at residues 13 to 34 (GHVV…KTSK) and 75 to 108 (KLGT…EKKK). Positions 75-84 (KLGTHKRAKR) are enriched in basic residues.

This sequence belongs to the eukaryotic ribosomal protein eL36 family.

The polypeptide is Large ribosomal subunit protein eL36x (RPL36C) (Arabidopsis thaliana (Mouse-ear cress)).